Reading from the N-terminus, the 450-residue chain is Adenylosuccinate lyase (450 aa).

N(6)-(1,2-dicarboxyethyl)-AMP is bound by residues 9 to 10, 75 to 77, and 101 to 102; these read RY, HHD, and TS. His149 acts as the Proton donor/acceptor in catalysis. Gln223 lines the N(6)-(1,2-dicarboxyethyl)-AMP pocket. Catalysis depends on Ser273, which acts as the Proton donor/acceptor. N(6)-(1,2-dicarboxyethyl)-AMP is bound by residues Ser274, 279–281, and 318–322; these read KRN and SVERV.

The protein belongs to the lyase 1 family. Adenylosuccinate lyase subfamily. Homotetramer. Residues from neighboring subunits contribute catalytic and substrate-binding residues to each active site.

It catalyses the reaction N(6)-(1,2-dicarboxyethyl)-AMP = fumarate + AMP. The catalysed reaction is (2S)-2-[5-amino-1-(5-phospho-beta-D-ribosyl)imidazole-4-carboxamido]succinate = 5-amino-1-(5-phospho-beta-D-ribosyl)imidazole-4-carboxamide + fumarate. It participates in purine metabolism; AMP biosynthesis via de novo pathway; AMP from IMP: step 2/2. Its pathway is purine metabolism; IMP biosynthesis via de novo pathway; 5-amino-1-(5-phospho-D-ribosyl)imidazole-4-carboxamide from 5-amino-1-(5-phospho-D-ribosyl)imidazole-4-carboxylate: step 2/2. Its function is as follows. Catalyzes two reactions in de novo purine nucleotide biosynthesis. Catalyzes the breakdown of 5-aminoimidazole- (N-succinylocarboxamide) ribotide (SAICAR or 2-[5-amino-1-(5-phospho-beta-D-ribosyl)imidazole-4-carboxamido]succinate) to 5-aminoimidazole-4-carboxamide ribotide (AICAR or 5-amino-1-(5-phospho-beta-D-ribosyl)imidazole-4-carboxamide) and fumarate, and of adenylosuccinate (ADS or N(6)-(1,2-dicarboxyethyl)-AMP) to adenosine monophosphate (AMP) and fumarate. The sequence is that of Adenylosuccinate lyase (purB) from Pyrococcus abyssi (strain GE5 / Orsay).